Reading from the N-terminus, the 302-residue chain is Putative receptor-like protein 16 (302 aa).

LRR repeat units lie at residues 1-19 (MNLT…LGNM), 20-43 (EMIE…FLKG), and 45-70 (DSLI…NFFS). One copy of the LRR 4; degenerate repeat lies at 72–91 (LELSMDNNLFTGKIGRGLQS). 7 LRR repeats span residues 92–115 (LRSL…WFDQ), 116–140 (LQDL…LFNM), 142–164 (SLQL…ISGY), 166–188 (ALKV…LLGK), 190–211 (IIVL…INTQ), 213–234 (IRIL…LCAV), and 235–258 (RSIH…LRNA).

This sequence belongs to the RLP family.

The chain is Putative receptor-like protein 16 from Arabidopsis thaliana (Mouse-ear cress).